A 334-amino-acid chain; its full sequence is Holliday junction branch migration complex subunit RuvB (334 aa).

The tract at residues 4–184 (EDRLISGTQK…FGIVQRLEYY (181 aa)) is large ATPase domain (RuvB-L). ATP-binding positions include Ile23, Arg24, Gly65, Lys68, Thr69, Thr70, 131–133 (EDY), Arg174, Tyr184, and Arg221. A Mg(2+)-binding site is contributed by Thr69. A small ATPAse domain (RuvB-S) region spans residues 185 to 255 (DLKSLTRIVL…VAKLALDMLE (71 aa)). A head domain (RuvB-H) region spans residues 258-334 (NEGFDYMDRK…YLHFGFDKPQ (77 aa)). Arg313 and Arg318 together coordinate DNA.

Belongs to the RuvB family. Homohexamer. Forms an RuvA(8)-RuvB(12)-Holliday junction (HJ) complex. HJ DNA is sandwiched between 2 RuvA tetramers; dsDNA enters through RuvA and exits via RuvB. An RuvB hexamer assembles on each DNA strand where it exits the tetramer. Each RuvB hexamer is contacted by two RuvA subunits (via domain III) on 2 adjacent RuvB subunits; this complex drives branch migration. In the full resolvosome a probable DNA-RuvA(4)-RuvB(12)-RuvC(2) complex forms which resolves the HJ.

The protein resides in the cytoplasm. The enzyme catalyses ATP + H2O = ADP + phosphate + H(+). In terms of biological role, the RuvA-RuvB-RuvC complex processes Holliday junction (HJ) DNA during genetic recombination and DNA repair, while the RuvA-RuvB complex plays an important role in the rescue of blocked DNA replication forks via replication fork reversal (RFR). RuvA specifically binds to HJ cruciform DNA, conferring on it an open structure. The RuvB hexamer acts as an ATP-dependent pump, pulling dsDNA into and through the RuvAB complex. RuvB forms 2 homohexamers on either side of HJ DNA bound by 1 or 2 RuvA tetramers; 4 subunits per hexamer contact DNA at a time. Coordinated motions by a converter formed by DNA-disengaged RuvB subunits stimulates ATP hydrolysis and nucleotide exchange. Immobilization of the converter enables RuvB to convert the ATP-contained energy into a lever motion, pulling 2 nucleotides of DNA out of the RuvA tetramer per ATP hydrolyzed, thus driving DNA branch migration. The RuvB motors rotate together with the DNA substrate, which together with the progressing nucleotide cycle form the mechanistic basis for DNA recombination by continuous HJ branch migration. Branch migration allows RuvC to scan DNA until it finds its consensus sequence, where it cleaves and resolves cruciform DNA. In Psychromonas ingrahamii (strain DSM 17664 / CCUG 51855 / 37), this protein is Holliday junction branch migration complex subunit RuvB.